The chain runs to 645 residues: Iron-regulated surface determinant protein B (645 aa).

The N-terminal stretch at 1 to 40 is a signal peptide; the sequence is MNKQQKEFKSFYSIRKSSLGVASVAISTLLLLMSNGEAQA. Residues 12 to 23 carry the YSIRK-G/S signaling motif motif; it reads YSIRKSSLGVAS. The span at 38-53 shows a compositional bias: low complexity; the sequence is AQAAAEETGGTNTEAQ. Positions 38-113 are disordered; the sequence is AQAAAEETGG…APKETKEVKP (76 aa). Residues 84 to 113 show a composition bias toward basic and acidic residues; it reads KEVEAPTSETKEAKEVKEVKAPKETKEVKP. NEAT domains follow at residues 144–269 and 341–458; these read SAPN…KFKT and KMTD…TKAN. Heme-binding residues include M362 and Y440. Composition is skewed to basic and acidic residues over residues 458 to 476 and 489 to 534; these read NTDK…KKEA and VEKE…KGEV. The tract at residues 458–619 is disordered; sequence NTDKSNKKEQ…LPQTGEESNK (162 aa). Low complexity predominate over residues 535 to 560; sequence ESSSTTPTKVVSTTQNVAKPTTASSK. The segment covering 585 to 615 has biased composition (polar residues); sequence NIKNTNDGHTQSQNNKNTQENKAKSLPQTGE. Positions 610–614 match the LPXTG sorting signal motif; sequence LPQTG. Pentaglycyl murein peptidoglycan amidated threonine is present on T613. Residues 614–645 constitute a propeptide, removed by sortase; sequence GEESNKDMTLPLMALLALSSIVAFVLPRKRKN.

This sequence belongs to the IsdB family. Interacts with host HBA; this interaction allows heme extraction as iron source. Interacts with IsdA.

The protein resides in the secreted. It localises to the cell wall. In terms of biological role, cell wall-anchored surface receptor that extracts heme from oxidized metHb to enable growth on hemoglobin as a sole iron source. Rapidly extracts heme from hemoglobin and transfers it to IsdA or IsdC, which then relays it to the membrane transporter/IsdEF for internalization. Also promotes resistance to hydrogen peroxide and killing by neutrophils. This is Iron-regulated surface determinant protein B (isdB) from Staphylococcus aureus (strain USA300 / TCH1516).